The following is a 970-amino-acid chain: Glycine dehydrogenase (decarboxylating) (970 aa).

At lysine 723 the chain carries N6-(pyridoxal phosphate)lysine.

The protein belongs to the GcvP family. In terms of assembly, the glycine cleavage system is composed of four proteins: P, T, L and H. Pyridoxal 5'-phosphate serves as cofactor.

It catalyses the reaction N(6)-[(R)-lipoyl]-L-lysyl-[glycine-cleavage complex H protein] + glycine + H(+) = N(6)-[(R)-S(8)-aminomethyldihydrolipoyl]-L-lysyl-[glycine-cleavage complex H protein] + CO2. Its function is as follows. The glycine cleavage system catalyzes the degradation of glycine. The P protein binds the alpha-amino group of glycine through its pyridoxal phosphate cofactor; CO(2) is released and the remaining methylamine moiety is then transferred to the lipoamide cofactor of the H protein. The chain is Glycine dehydrogenase (decarboxylating) from Burkholderia pseudomallei (strain 1106a).